We begin with the raw amino-acid sequence, 459 residues long: Glutamate--tRNA ligase 2 (459 aa).

A 'HIGH' region motif is present at residues 8–18 (PSPTGYLHIGG). The 'KMSKS' region signature appears at 237-241 (KLSKR). Lys240 lines the ATP pocket.

It belongs to the class-I aminoacyl-tRNA synthetase family. Glutamate--tRNA ligase type 1 subfamily. In terms of assembly, monomer.

It localises to the cytoplasm. The enzyme catalyses tRNA(Glu) + L-glutamate + ATP = L-glutamyl-tRNA(Glu) + AMP + diphosphate. In terms of biological role, catalyzes the attachment of glutamate to tRNA(Glu) in a two-step reaction: glutamate is first activated by ATP to form Glu-AMP and then transferred to the acceptor end of tRNA(Glu). This is Glutamate--tRNA ligase 2 from Campylobacter curvus (strain 525.92).